The following is a 439-amino-acid chain: MNIFEHSIKNVDKGNVVAIVGTQWGDEGKGKIIDILSKYSDITCRFNGGGNAGHTICVGNKKHALHLLPCGVLYENNINILGNCMVIHLKTLMKEINNLGNNILDRIYISEKAHILFDIHQEIDAIQETRKSKDGNAIGTTKKGIGPCYSTKASRIGIRMGSLRNFENFKKLYIKLIDNLMDLYNIKDYNKEEELNEFYTYHKILKDKIINIISYINKSIDSKKYILIEGANAAMLDIDLGTYPFVTSSSTTLGGIFSGLGIHHKKLNLVVGVVKSYLTRVGSGPFLTEQCNEIGEYLTKKGFEYGTTTNRPRRCGWLDLPMLFYVKYINCIDIINLTKLDVLSGLKEIYVCVDYKNKTTGELLERGSYPLEDEQLREYEPVYEKFEGWDEDITNCIEFDELPENAKKYVLTIESYIKTPIVWVGVGPTRDNTITRKFD.

GTP is bound by residues 25–31 (GDEGKGK), 53–55 (GHT), and lysine 62. Aspartate 26 acts as the Proton acceptor in catalysis. Mg(2+) contacts are provided by aspartate 26 and glycine 53. IMP contacts are provided by residues 26–29 (DEGK) and 51–54 (NAGH). The active-site Proton donor is the histidine 54. IMP-binding residues include threonine 141, arginine 155, asparagine 232, and threonine 247. Residue threonine 307 coordinates GTP. Substrate is bound at residue 307 to 313 (TTTNRPR). Arginine 311 contacts IMP. Residues arginine 313, 339-341 (KLD), and 425-427 (GVG) each bind GTP.

This sequence belongs to the adenylosuccinate synthetase family. Homodimer. Requires Mg(2+) as cofactor.

Its subcellular location is the cytoplasm. The catalysed reaction is IMP + L-aspartate + GTP = N(6)-(1,2-dicarboxyethyl)-AMP + GDP + phosphate + 2 H(+). Its pathway is purine metabolism; AMP biosynthesis via de novo pathway; AMP from IMP: step 1/2. Functionally, plays an important role in the salvage pathway for purine nucleotide biosynthesis. Catalyzes the first committed step in the biosynthesis of AMP from IMP. The polypeptide is Adenylosuccinate synthetase (Plasmodium yoelii yoelii).